The primary structure comprises 594 residues: Apolipoprotein N-acyltransferase (594 aa).

Residues 1–29 (MIPAVTDDDPLEDPLDDDVAPGLDDAEPE) are compositionally biased toward acidic residues. Residues 1 to 48 (MIPAVTDDDPLEDPLDDDVAPGLDDAEPEPEPRDEHDEPSRPATGSRI) are disordered. Residues 1-67 (MIPAVTDDDP…RFGKGVLDRC (67 aa)) lie on the Cytoplasmic side of the membrane. Over residues 30–40 (PEPRDEHDEPS) the composition is skewed to basic and acidic residues. A helical transmembrane segment spans residues 68–87 (APLSAAIGGGLALWLSFPPI). Residues 88 to 116 (GWWFTAFPGLALLGWVLTRTATTKAGGFG) are Extracellular-facing. The chain crosses the membrane as a helical span at residues 117–134 (YGVLFGLAFYVPLLPWIS). The Cytoplasmic portion of the chain corresponds to 135 to 138 (GLVG). The helical transmembrane segment at 139–160 (AVPWLALAFAESLFCGLFGLGA) threads the bilayer. At 161 to 221 (VVVVRLPGWP…IGGAPLVSFA (61 aa)) the chain is on the extracellular side. A helical membrane pass occupies residues 222–239 (VALIGFSLTLLTAQIVWW). At 240 to 251 (WRHGHKPGVPAP) the chain is on the cytoplasmic side. Residues 252–269 (AVMLPGVAIAASLLVTAL) traverse the membrane as a helical segment. Residues 270–554 (VWPQVRQSGT…TDLTPATKWG (285 aa)) lie on the Extracellular side of the membrane. A CN hydrolase domain is found at 287 to 543 (VTVAAVQGNV…PAYLDNQIRL (257 aa)). Glu340 (proton acceptor) is an active-site residue. Lys405 is a catalytic residue. Cys455 serves as the catalytic Nucleophile. The helical transmembrane segment at 555 to 572 (PIVQAVLVIAGVAVLLIA) threads the bilayer. The Cytoplasmic segment spans residues 573–594 (ILHNGRFAPRMLRRRSATTVKR).

This sequence belongs to the CN hydrolase family. Apolipoprotein N-acyltransferase subfamily. As to quaternary structure, interacts with Ppm1 (AC A0QZ12) upon coexpression in E.coli, which increases the PPM synthase activity of Ppm1.

The protein resides in the cell membrane. The enzyme catalyses N-terminal S-1,2-diacyl-sn-glyceryl-L-cysteinyl-[lipoprotein] + a glycerophospholipid = N-acyl-S-1,2-diacyl-sn-glyceryl-L-cysteinyl-[lipoprotein] + a 2-acyl-sn-glycero-3-phospholipid + H(+). It participates in protein modification; lipoprotein biosynthesis (N-acyl transfer). Catalyzes the phospholipid dependent N-acylation of the N-terminal cysteine of apolipoprotein, the last step in lipoprotein maturation. Can transfer a number of fatty acids (C16 and C19, palmitic and probably tuberculostearic acids respectively are shown). Enhances the polyprenol monophosphomannose (PPM) synthase activity of Ppm1 (AC A0QZ12) without itself having PPM synthase catalytic activity. The chain is Apolipoprotein N-acyltransferase from Mycolicibacterium smegmatis (strain ATCC 700084 / mc(2)155) (Mycobacterium smegmatis).